Here is a 214-residue protein sequence, read N- to C-terminus: ATP-dependent Clp protease proteolytic subunit (214 aa).

The active-site Nucleophile is the S110. The active site involves H135.

Belongs to the peptidase S14 family. As to quaternary structure, fourteen ClpP subunits assemble into 2 heptameric rings which stack back to back to give a disk-like structure with a central cavity, resembling the structure of eukaryotic proteasomes.

The protein localises to the cytoplasm. It catalyses the reaction Hydrolysis of proteins to small peptides in the presence of ATP and magnesium. alpha-casein is the usual test substrate. In the absence of ATP, only oligopeptides shorter than five residues are hydrolyzed (such as succinyl-Leu-Tyr-|-NHMec, and Leu-Tyr-Leu-|-Tyr-Trp, in which cleavage of the -Tyr-|-Leu- and -Tyr-|-Trp bonds also occurs).. Functionally, cleaves peptides in various proteins in a process that requires ATP hydrolysis. Has a chymotrypsin-like activity. Plays a major role in the degradation of misfolded proteins. The sequence is that of ATP-dependent Clp protease proteolytic subunit from Legionella pneumophila (strain Paris).